Consider the following 152-residue polypeptide: CASP-like protein 5B1 (152 aa).

The Cytoplasmic segment spans residues 1 to 11 (MKKMIGSPGTM). The helical transmembrane segment at 12–32 (SGLILRLGQCATAAASIGVMV) threads the bilayer. The Extracellular portion of the chain corresponds to 33–42 (SSYDFSNYTA). N-linked (GlcNAc...) asparagine glycosylation occurs at N39. The helical transmembrane segment at 43 to 63 (FCFLVASMGLQLIWSFGLACL) threads the bilayer. At 64 to 77 (DVYAIRRKSDLRSP) the chain is on the cytoplasmic side. A helical membrane pass occupies residues 78 to 98 (ILLSLFTVGDWVTALLALAAA). Over 99-131 (CSSAGVTVLFTKDTEFCRQQPALSCDRFQISVG) the chain is Extracellular. Residues 132-152 (LSFFNWFLAAISSHTMFWILI) form a helical membrane-spanning segment.

The protein belongs to the Casparian strip membrane proteins (CASP) family. As to quaternary structure, homodimer and heterodimers. In terms of tissue distribution, expressed in leaves, exclusively in hair cells (e.g. differentiated trichomes and immature cells).

The protein localises to the cell membrane. This is CASP-like protein 5B1 from Arabidopsis thaliana (Mouse-ear cress).